We begin with the raw amino-acid sequence, 491 residues long: UDP-N-acetylmuramate--L-alanine ligase (491 aa).

126-132 is a binding site for ATP; the sequence is GTHGKTT.

The protein belongs to the MurCDEF family.

The protein localises to the cytoplasm. The enzyme catalyses UDP-N-acetyl-alpha-D-muramate + L-alanine + ATP = UDP-N-acetyl-alpha-D-muramoyl-L-alanine + ADP + phosphate + H(+). The protein operates within cell wall biogenesis; peptidoglycan biosynthesis. Its function is as follows. Cell wall formation. The sequence is that of UDP-N-acetylmuramate--L-alanine ligase from Shigella boydii serotype 18 (strain CDC 3083-94 / BS512).